The sequence spans 972 residues: N-alpha-acetyltransferase 25, NatB auxiliary subunit (972 aa).

TPR repeat units follow at residues 11 to 44, 45 to 78, 79 to 112, and 114 to 146; these read NDRR…HKDL, HCAK…EPTD, DNSL…VPNS, and EYHS…VPKN.

This sequence belongs to the MDM20/NAA25 family. As to quaternary structure, component of the N-terminal acetyltransferase B (NatB) complex which is composed of NAA20 and NAA25.

It is found in the cytoplasm. In terms of biological role, non-catalytic subunit of the NatB complex which catalyzes acetylation of the N-terminal methionine residues of peptides beginning with Met-Asp, Met-Glu, Met-Asn and Met-Gln. May play a role in normal cell-cycle progression. This is N-alpha-acetyltransferase 25, NatB auxiliary subunit (NAA25) from Homo sapiens (Human).